Reading from the N-terminus, the 547-residue chain is Chaperonin GroEL (547 aa).

Residues 29–32, 86–90, G413, 478–480, and D494 each bind ATP; these read TLGP, DGTTT, and DVL.

The protein belongs to the chaperonin (HSP60) family. As to quaternary structure, forms a cylinder of 14 subunits composed of two heptameric rings stacked back-to-back. Interacts with the co-chaperonin GroES.

The protein resides in the cytoplasm. It catalyses the reaction ATP + H2O + a folded polypeptide = ADP + phosphate + an unfolded polypeptide.. Its function is as follows. Together with its co-chaperonin GroES, plays an essential role in assisting protein folding. The GroEL-GroES system forms a nano-cage that allows encapsulation of the non-native substrate proteins and provides a physical environment optimized to promote and accelerate protein folding. The protein is Chaperonin GroEL of Alkaliphilus metalliredigens (strain QYMF).